A 339-amino-acid chain; its full sequence is Fructose-1,6-bisphosphatase isozyme 2 (339 aa).

The interval 3 to 10 is important for interaction with ALDOA; sequence DRSPFETD. AMP contacts are provided by residues V18 and 28–32; that span reads TGELT. The Mg(2+) site is built by D69 and E98. Residue 113 to 114 participates in AMP binding; the sequence is KY. Positions 119, 121, and 122 each coordinate Mg(2+). Residue D122 coordinates substrate. Position 141 (R141) interacts with AMP. The Nuclear localization signal signature appears at 204–208; that stretch reads KKKGK. A substrate-binding site is contributed by 213 to 216; it reads NEGY. 2 positions are modified to phosphotyrosine: Y216 and Y219. Substrate contacts are provided by residues 245 to 249, Y265, and K275; that span reads YVGSM. E281 is a binding site for Mg(2+).

Belongs to the FBPase class 1 family. Homotetramer. Interacts with ALDOA; the interaction blocks inhibition by physiological concentrations of AMP and reduces inhibition by Ca(2+). Interacts with alpha-actinin and F-actin. Mg(2+) serves as cofactor.

The protein localises to the cell junction. It localises to the cytoplasm. The protein resides in the nucleus. It is found in the myofibril. Its subcellular location is the sarcomere. The protein localises to the z line. The enzyme catalyses beta-D-fructose 1,6-bisphosphate + H2O = beta-D-fructose 6-phosphate + phosphate. It participates in carbohydrate biosynthesis; gluconeogenesis. Subject to complex allosteric regulation. The enzyme can assume an active R-state, or an inactive T-state. Intermediate conformations may exist. AMP acts as an allosteric inhibitor. Fructose 2,6-bisphosphate acts as a competitive inhibitor. Strongly inhibited by Ca(2+). Functionally, catalyzes the hydrolysis of fructose 1,6-bisphosphate to fructose 6-phosphate in the presence of divalent cations and probably participates in glycogen synthesis from carbohydrate precursors, such as lactate. The sequence is that of Fructose-1,6-bisphosphatase isozyme 2 (FBP2) from Bos taurus (Bovine).